Here is a 77-residue protein sequence, read N- to C-terminus: NCHVEYEKTNRARKHRPCLYDPSQVCFTEHTQSQAAWLCAKPYKVICIFVSFLSFDYKLVQKVCPDYNFQSEHPYFG.

Residues 1–77 (NCHVEYEKTN…NFQSEHPYFG (77 aa)) form a v (Cys-rich) region.

The protein belongs to the neurexophilin family. In terms of processing, may be proteolytically processed at the boundary between the N-terminal non-conserved and the central conserved domain in neuron-like cells.

The protein resides in the secreted. Functionally, may be signaling molecules that resemble neuropeptides and that act by binding to alpha-neurexins and possibly other receptors. In Macaca mulatta (Rhesus macaque), this protein is Neurexophilin-4 (NXPH4).